The primary structure comprises 269 residues: Holocytochrome-c synthase (269 aa).

Residues Met1 to Asp72 are disordered. HRM repeat units lie at residues Gly25–His30 and Glu41–Gln46.

This sequence belongs to the cytochrome c-type heme lyase family.

The protein localises to the mitochondrion inner membrane. It localises to the mitochondrion intermembrane space. It catalyses the reaction holo-[cytochrome c] = apo-[cytochrome c] + heme b. Lyase that catalyzes the covalent linking of the heme group to the cytochrome C apoprotein to produce the mature functional cytochrome. This Saccharomyces cerevisiae (strain ATCC 204508 / S288c) (Baker's yeast) protein is Holocytochrome-c synthase (CYC3).